The sequence spans 103 residues: Large ribosomal subunit protein bL21 (103 aa).

Belongs to the bacterial ribosomal protein bL21 family. In terms of assembly, part of the 50S ribosomal subunit. Contacts protein L20.

Its function is as follows. This protein binds to 23S rRNA in the presence of protein L20. This chain is Large ribosomal subunit protein bL21, found in Methylococcus capsulatus (strain ATCC 33009 / NCIMB 11132 / Bath).